We begin with the raw amino-acid sequence, 318 residues long: Methionyl-tRNA formyltransferase (318 aa).

Residue 110-113 coordinates (6S)-5,6,7,8-tetrahydrofolate; sequence SLLP.

This sequence belongs to the Fmt family.

The catalysed reaction is L-methionyl-tRNA(fMet) + (6R)-10-formyltetrahydrofolate = N-formyl-L-methionyl-tRNA(fMet) + (6S)-5,6,7,8-tetrahydrofolate + H(+). Functionally, attaches a formyl group to the free amino group of methionyl-tRNA(fMet). The formyl group appears to play a dual role in the initiator identity of N-formylmethionyl-tRNA by promoting its recognition by IF2 and preventing the misappropriation of this tRNA by the elongation apparatus. This chain is Methionyl-tRNA formyltransferase, found in Lacticaseibacillus casei (strain BL23) (Lactobacillus casei).